Reading from the N-terminus, the 251-residue chain is tRNA (guanine-N(7)-)-methyltransferase (251 aa).

Positions 80, 105, 132, and 155 each coordinate S-adenosyl-L-methionine. The active site involves D155. Substrate is bound by residues K159, D191, and T228 to E231.

Belongs to the class I-like SAM-binding methyltransferase superfamily. TrmB family.

The enzyme catalyses guanosine(46) in tRNA + S-adenosyl-L-methionine = N(7)-methylguanosine(46) in tRNA + S-adenosyl-L-homocysteine. It participates in tRNA modification; N(7)-methylguanine-tRNA biosynthesis. In terms of biological role, catalyzes the formation of N(7)-methylguanine at position 46 (m7G46) in tRNA. The chain is tRNA (guanine-N(7)-)-methyltransferase from Histophilus somni (strain 2336) (Haemophilus somnus).